The primary structure comprises 200 residues: Fibrillarin-like rRNA/tRNA 2'-O-methyltransferase (200 aa).

S-adenosyl-L-methionine contacts are provided by residues 62–63 (TT), 78–79 (EF), 103–104 (DA), and 123–126 (DVAQ).

This sequence belongs to the methyltransferase superfamily. Fibrillarin family. In terms of assembly, interacts with nop5. Component of box C/D small ribonucleoprotein (sRNP) particles that contain rpl7ae, FlpA and nop5, plus a guide RNA.

Functionally, involved in pre-rRNA and tRNA processing. Utilizes the methyl donor S-adenosyl-L-methionine to catalyze the site-specific 2'-hydroxyl methylation of ribose moieties in rRNA and tRNA. Site specificity is provided by a guide RNA that base pairs with the substrate. Methylation occurs at a characteristic distance from the sequence involved in base pairing with the guide RNA. This chain is Fibrillarin-like rRNA/tRNA 2'-O-methyltransferase, found in Methanoculleus marisnigri (strain ATCC 35101 / DSM 1498 / JR1).